A 299-amino-acid polypeptide reads, in one-letter code: MAYERFTSAITLLMHWRNRLDPYWKLARGDRPVGFLLLLWPTWWALWLAAGGVPPWWTLCVFTTGIWLTRSAGCVINDYTDRWLDPHVERTRIRPLVTGAVSPRNALLMFATLMLIAFGLVLTMNQLTVLLSVVGLFLAMTYPYLKRYTYLPQVYLGLAFGWGIPMAFAAIQGKVPTQAWLLYVANILWTTAYDTWCAMVDRDDDIKMGAKSTAILFADLDLTVQGVLYTLMLFTLCLVGLRATLSHTYWISLIAAVALIGYQFIIARRREPTACFRAFMHNNWVGMTIFAGIALATTH.

Helical transmembrane passes span Val33–Val53, Trp56–Ile76, Leu107–Leu127, Leu151–Ile171, Trp180–Val200, Ala214–Phe234, His247–Ala267, and Ala278–Thr298.

The protein belongs to the UbiA prenyltransferase family. The cofactor is Mg(2+).

Its subcellular location is the cell inner membrane. It carries out the reaction all-trans-octaprenyl diphosphate + 4-hydroxybenzoate = 4-hydroxy-3-(all-trans-octaprenyl)benzoate + diphosphate. Its pathway is cofactor biosynthesis; ubiquinone biosynthesis. In terms of biological role, catalyzes the prenylation of para-hydroxybenzoate (PHB) with an all-trans polyprenyl group. Mediates the second step in the final reaction sequence of ubiquinone-8 (UQ-8) biosynthesis, which is the condensation of the polyisoprenoid side chain with PHB, generating the first membrane-bound Q intermediate 3-octaprenyl-4-hydroxybenzoate. The protein is 4-hydroxybenzoate octaprenyltransferase of Xylella fastidiosa (strain 9a5c).